Consider the following 681-residue polypeptide: DNA ligase (681 aa).

NAD(+) is bound by residues 32-36, 81-82, and glutamate 113; these read DIEYD and SL. Lysine 115 functions as the N6-AMP-lysine intermediate in the catalytic mechanism. 4 residues coordinate NAD(+): arginine 136, glutamate 173, lysine 290, and lysine 314. Residues cysteine 408, cysteine 411, cysteine 426, and cysteine 432 each coordinate Zn(2+). One can recognise a BRCT domain in the interval 596-681; sequence EIDSPFAGKT…LNNHGDVSTL (86 aa).

Belongs to the NAD-dependent DNA ligase family. LigA subfamily. Mg(2+) is required as a cofactor. The cofactor is Mn(2+).

It catalyses the reaction NAD(+) + (deoxyribonucleotide)n-3'-hydroxyl + 5'-phospho-(deoxyribonucleotide)m = (deoxyribonucleotide)n+m + AMP + beta-nicotinamide D-nucleotide.. Its function is as follows. DNA ligase that catalyzes the formation of phosphodiester linkages between 5'-phosphoryl and 3'-hydroxyl groups in double-stranded DNA using NAD as a coenzyme and as the energy source for the reaction. It is essential for DNA replication and repair of damaged DNA. The sequence is that of DNA ligase from Pectobacterium atrosepticum (strain SCRI 1043 / ATCC BAA-672) (Erwinia carotovora subsp. atroseptica).